A 291-amino-acid chain; its full sequence is ATP synthase gamma chain (291 aa).

It belongs to the ATPase gamma chain family. As to quaternary structure, F-type ATPases have 2 components, CF(1) - the catalytic core - and CF(0) - the membrane proton channel. CF(1) has five subunits: alpha(3), beta(3), gamma(1), delta(1), epsilon(1). CF(0) has three main subunits: a, b and c.

The protein resides in the cell inner membrane. Functionally, produces ATP from ADP in the presence of a proton gradient across the membrane. The gamma chain is believed to be important in regulating ATPase activity and the flow of protons through the CF(0) complex. This is ATP synthase gamma chain from Burkholderia multivorans (strain ATCC 17616 / 249).